Here is a 364-residue protein sequence, read N- to C-terminus: Endoglucanase A (364 aa).

E169 (proton donor) is an active-site residue. E293 serves as the catalytic Nucleophile.

It belongs to the glycosyl hydrolase 5 (cellulase A) family.

The protein localises to the cytoplasm. The enzyme catalyses Endohydrolysis of (1-&gt;4)-beta-D-glucosidic linkages in cellulose, lichenin and cereal beta-D-glucans.. The catalysed reaction is Endohydrolysis of (1-&gt;4)-beta-D-xylosidic linkages in xylans.. Hydrolyzes both carboxymethylcellulose and xylan. Probably has a role in hydrolyzing oligosaccharides derived from cellulose, which are transported across the cell wall. In Ruminococcus albus, this protein is Endoglucanase A (celA).